The primary structure comprises 273 residues: NADPH-dependent 7-cyano-7-deazaguanine reductase (273 aa).

Residue 81–83 (VES) participates in substrate binding. 83 to 84 (SK) serves as a coordination point for NADPH. Catalysis depends on cysteine 179, which acts as the Thioimide intermediate. The active-site Proton donor is aspartate 186. 218–219 (AE) contributes to the substrate binding site. 247–248 (RG) contacts NADPH.

It belongs to the GTP cyclohydrolase I family. QueF type 2 subfamily. In terms of assembly, homodimer.

It is found in the cytoplasm. The catalysed reaction is 7-aminomethyl-7-carbaguanine + 2 NADP(+) = 7-cyano-7-deazaguanine + 2 NADPH + 3 H(+). Its pathway is tRNA modification; tRNA-queuosine biosynthesis. In terms of biological role, catalyzes the NADPH-dependent reduction of 7-cyano-7-deazaguanine (preQ0) to 7-aminomethyl-7-deazaguanine (preQ1). This is NADPH-dependent 7-cyano-7-deazaguanine reductase from Rickettsia canadensis (strain McKiel).